A 1292-amino-acid polypeptide reads, in one-letter code: DNA-directed RNA polymerase subunit beta' (1292 aa).

The Zn(2+) site is built by Cys70, Cys72, Cys85, and Cys88. 3 residues coordinate Mg(2+): Asp532, Asp534, and Asp536. Zn(2+) contacts are provided by Cys911, Cys987, Cys994, and Cys997.

This sequence belongs to the RNA polymerase beta' chain family. The RNAP catalytic core consists of 2 alpha, 1 beta, 1 beta' and 1 omega subunit. When a sigma factor is associated with the core the holoenzyme is formed, which can initiate transcription. Mg(2+) is required as a cofactor. Zn(2+) serves as cofactor.

The catalysed reaction is RNA(n) + a ribonucleoside 5'-triphosphate = RNA(n+1) + diphosphate. Its function is as follows. DNA-dependent RNA polymerase catalyzes the transcription of DNA into RNA using the four ribonucleoside triphosphates as substrates. In Mycoplasma genitalium (strain ATCC 33530 / DSM 19775 / NCTC 10195 / G37) (Mycoplasmoides genitalium), this protein is DNA-directed RNA polymerase subunit beta'.